The primary structure comprises 427 residues: mRNA cap guanine-N(7) methyltransferase (427 aa).

The disordered stretch occupies residues 1 to 79 (MSLNYEQNAA…EPETEAASGA (79 aa)). A phosphoserine mark is found at serine 22, serine 24, serine 29, serine 46, and serine 48. Residues 44 to 57 (HVSKSPREYYDEPG) show a composition bias toward basic and acidic residues. The mRNA cap 0 methyltransferase domain occupies 103-411 (SKIFFMRNFN…LYLVCAFKKC (309 aa)). Residue 112 to 113 (NN) participates in mRNA binding. S-adenosyl-L-methionine is bound by residues lysine 116, cysteine 143, aspartate 165, aspartate 202, glutamine 225, and tyrosine 230.

The protein belongs to the class I-like SAM-binding methyltransferase superfamily. mRNA cap 0 methyltransferase family.

It is found in the nucleus. It catalyses the reaction a 5'-end (5'-triphosphoguanosine)-ribonucleoside in mRNA + S-adenosyl-L-methionine = a 5'-end (N(7)-methyl 5'-triphosphoguanosine)-ribonucleoside in mRNA + S-adenosyl-L-homocysteine. In terms of biological role, mRNA-capping methyltransferase that methylates the N7 position of the added guanosine to the 5'-cap structure of mRNAs. Binds RNA containing 5'-terminal GpppC. The protein is mRNA cap guanine-N(7) methyltransferase of Drosophila melanogaster (Fruit fly).